A 291-amino-acid chain; its full sequence is NAD kinase (291 aa).

The active-site Proton acceptor is D73. NAD(+) contacts are provided by residues 73–74, 147–148, R175, D177, and Q246; these read DG and ND.

Belongs to the NAD kinase family. A divalent metal cation serves as cofactor.

It localises to the cytoplasm. The enzyme catalyses NAD(+) + ATP = ADP + NADP(+) + H(+). Its function is as follows. Involved in the regulation of the intracellular balance of NAD and NADP, and is a key enzyme in the biosynthesis of NADP. Catalyzes specifically the phosphorylation on 2'-hydroxyl of the adenosine moiety of NAD to yield NADP. The polypeptide is NAD kinase (Laribacter hongkongensis (strain HLHK9)).